The primary structure comprises 122 residues: UPF0231 protein VF_2154 (122 aa).

Belongs to the UPF0231 family.

The polypeptide is UPF0231 protein VF_2154 (Aliivibrio fischeri (strain ATCC 700601 / ES114) (Vibrio fischeri)).